Here is a 464-residue protein sequence, read N- to C-terminus: Probable multidrug resistance protein NorM (464 aa).

12 helical membrane passes run Phe13 to Phe32, Ala52 to Val74, Leu94 to Pro116, Tyr131 to Ala153, Ile160 to Gly182, Thr192 to Ala214, Trp244 to Ala266, Thr281 to Trp303, Ala315 to Phe337, Val352 to Leu373, Leu394 to Leu416, and Thr421 to Leu443.

Belongs to the multi antimicrobial extrusion (MATE) (TC 2.A.66.1) family.

It is found in the cell inner membrane. Functionally, multidrug efflux pump. The protein is Probable multidrug resistance protein NorM (norM) of Synechococcus sp. (strain ATCC 27144 / PCC 6301 / SAUG 1402/1) (Anacystis nidulans).